A 194-amino-acid chain; its full sequence is Ras-related protein Rab-22A (194 aa).

12 to 20 serves as a coordination point for GTP; the sequence is GDTGVGKSS. An Effector region motif is present at residues 34 to 42; the sequence is INPTIGASF. GTP-binding positions include 60–64, 118–121, and 148–150; these read DTAGQ, NKCD, and SAK. A disordered region spans residues 174-194; that stretch reads PSGGKGFKLRRQPSEPKRSCC. Over residues 185-194 the composition is skewed to basic and acidic residues; the sequence is QPSEPKRSCC. 2 S-geranylgeranyl cysteine lipidation sites follow: C193 and C194.

This sequence belongs to the small GTPase superfamily. Rab family. Interacts directly with ZFYVE20. Binds EEA1. Interacts (in its GTP-bound form) with RABGEF1. Interacts (in its GTP-bound form) with RINL.

The protein localises to the endosome membrane. Its subcellular location is the cell membrane. It localises to the early endosome. The protein resides in the late endosome. It is found in the cell projection. The protein localises to the ruffle. Its subcellular location is the cytoplasmic vesicle. It localises to the phagosome. The protein resides in the phagosome membrane. Its function is as follows. Plays a role in endocytosis and intracellular protein transport. Mediates trafficking of TF from early endosomes to recycling endosomes. Required for NGF-mediated endocytosis of NTRK1, and subsequent neurite outgrowth. Binds GTP and GDP and has low GTPase activity. Alternates between a GTP-bound active form and a GDP-bound inactive form. The chain is Ras-related protein Rab-22A (RAB22A) from Homo sapiens (Human).